The following is a 38-amino-acid chain: MKVRASVKPRCEYCKVIKRKGVIRVICSRTPKHKQRQG.

Belongs to the bacterial ribosomal protein bL36 family.

The protein is Large ribosomal subunit protein bL36 of Chloroflexus aurantiacus (strain ATCC 29366 / DSM 635 / J-10-fl).